Here is a 323-residue protein sequence, read N- to C-terminus: V-type ATP synthase subunit C (323 aa).

This sequence belongs to the V-ATPase V0D/AC39 subunit family.

In terms of biological role, produces ATP from ADP in the presence of a proton gradient across the membrane. The sequence is that of V-type ATP synthase subunit C (atpC) from Thermus thermophilus (strain ATCC 27634 / DSM 579 / HB8).